The following is a 1363-amino-acid chain: Vascular endothelial growth factor receptor 3 (1363 aa).

The first 24 residues, 1 to 24, serve as a signal peptide directing secretion; that stretch reads MQPGAALNRRLWLCLGLLQGLANG. Topologically, residues 25–775 are extracellular; that stretch reads YSMTPPTLNI…EGSEDKGSME (751 aa). Residues asparagine 33, asparagine 104, asparagine 166, asparagine 251, asparagine 299, and asparagine 411 are each glycosylated (N-linked (GlcNAc...) asparagine). Ig-like C2-type domains lie at 44–118, 151–213, 230–326, 331–415, 422–552, 555–671, and 678–764; these read GDSL…YIKA, KDSM…WGDQ, YDIQ…TEVI, PFIS…ISLE, PHIH…FYVT, PDGF…KYLS, and PRLT…ASVA. Cystine bridges form between cysteine 51–cysteine 111 and cysteine 158–cysteine 206. Cysteine 252 and cysteine 310 are oxidised to a cystine. 3 disulfides stabilise this stretch: cysteine 445/cysteine 534, cysteine 466/cysteine 486, and cysteine 578/cysteine 653. N-linked (GlcNAc...) asparagine glycosylation is found at asparagine 515, asparagine 527, asparagine 582, asparagine 594, and asparagine 683. A disulfide bond links cysteine 699 and cysteine 751. An N-linked (GlcNAc...) asparagine glycan is attached at asparagine 758. Residues 776-796 traverse the membrane as a helical segment; sequence IVILIGTGVIAVFFWVLLLLI. The Cytoplasmic portion of the chain corresponds to 797 to 1363; that stretch reads FCNMKRPAHA…GSTFFADSNY (567 aa). Residues tyrosine 830 and tyrosine 833 each carry the phosphotyrosine; by SRC modification. Residues 845 to 1173 enclose the Protein kinase domain; it reads LHLGRVLGHG…DLVEILGDLL (329 aa). ATP contacts are provided by residues 851 to 859 and lysine 879; that span reads LGHGAFGKV. Aspartate 1037 functions as the Proton acceptor in the catalytic mechanism. Tyrosine 1063 carries the post-translational modification Phosphotyrosine; by autocatalysis and SRC. 4 positions are modified to phosphotyrosine; by autocatalysis: tyrosine 1068, tyrosine 1230, tyrosine 1231, and tyrosine 1265. Residues 1289–1317 are compositionally biased toward basic and acidic residues; sequence SRHRQEGSFSRKDPGQHMDISRGHPDLQG. The disordered stretch occupies residues 1289-1330; the sequence is SRHRQEGSFSRKDPGQHMDISRGHPDLQGRRRRPTQGAQGGK. Tyrosine 1333 and tyrosine 1337 each carry phosphotyrosine; by autocatalysis and SRC. Residue tyrosine 1363 is modified to Phosphotyrosine; by autocatalysis.

It belongs to the protein kinase superfamily. Tyr protein kinase family. CSF-1/PDGF receptor subfamily. In terms of assembly, interacts with VEGFC and VEGFD. Monomer in the absence of bound VEGFC or VEGFD. Homodimer in the presence of bound VEGFC or VEGFD. Can also form a heterodimer with KDR. Interacts with PTPN14; the interaction is enhanced by stimulation with VEGFC. Interacts with CRK, GRB2, PTK2/FAK1, SHC1, PIK3R1 and PTPN11/SHP-2. Identified in a complex with SRC and ITGB1. Identified in a complex with SRC and ITGB1. Autophosphorylated on tyrosine residues upon ligand binding. Autophosphorylation occurs in trans, i.e. one subunit of the dimeric receptor phosphorylates tyrosine residues on the other subunit. Phosphorylation in response to H(2)O(2) is mediated by a process that requires SRC and PRKCD activity. Phosphorylation at Tyr-1068 is required for autophosphorylation at additional tyrosine residues. Phosphorylation at Tyr-1063 and Tyr-1337 is important for interaction with CRK and subsequent activation of MAPK8. Phosphorylation at Tyr-1230, Tyr-1231 and Tyr-1337 is important for interaction with GRB2 and subsequent activation of the AKT1 and MAPK1/ERK2 and/or MAPK3/ERK1 signaling pathways. In response to endothelial cell adhesion onto collagen, can also be phosphorylated in the absence of FLT4 kinase activity by SRC.

Its subcellular location is the cell membrane. The protein localises to the cytoplasm. It localises to the nucleus. It carries out the reaction L-tyrosyl-[protein] + ATP = O-phospho-L-tyrosyl-[protein] + ADP + H(+). Its activity is regulated as follows. Present in an inactive conformation in the absence of bound ligand. Binding of VEGFC or VEGFD leads to dimerization and activation by autophosphorylation on tyrosine residues. Its function is as follows. Tyrosine-protein kinase that acts as a cell-surface receptor for VEGFC and VEGFD, and plays an essential role in adult lymphangiogenesis and in the development of the vascular network and the cardiovascular system during embryonic development. Promotes proliferation, survival and migration of endothelial cells, and regulates angiogenic sprouting. Signaling by activated FLT4 leads to enhanced production of VEGFC, and to a lesser degree VEGFA, thereby creating a positive feedback loop that enhances FLT4 signaling. Modulates KDR signaling by forming heterodimers. Mediates activation of the MAPK1/ERK2, MAPK3/ERK1 signaling pathway, of MAPK8 and the JUN signaling pathway, and of the AKT1 signaling pathway. Phosphorylates SHC1. Mediates phosphorylation of PIK3R1, the regulatory subunit of phosphatidylinositol 3-kinase. Promotes phosphorylation of MAPK8 at 'Thr-183' and 'Tyr-185', and of AKT1 at 'Ser-473'. This chain is Vascular endothelial growth factor receptor 3 (Flt4), found in Rattus norvegicus (Rat).